The sequence spans 505 residues: Probable cytochrome P450 28a5 (505 aa).

Residue cysteine 450 participates in heme binding.

Belongs to the cytochrome P450 family. The cofactor is heme.

It is found in the endoplasmic reticulum membrane. The protein resides in the microsome membrane. May be involved in the metabolism of insect hormones and in the breakdown of synthetic insecticides. The sequence is that of Probable cytochrome P450 28a5 (Cyp28a5) from Drosophila melanogaster (Fruit fly).